A 360-amino-acid chain; its full sequence is 3-dehydroquinate synthase (360 aa).

NAD(+) contacts are provided by residues 71–76, 105–109, 129–130, Lys142, Lys151, and 169–172; these read DGEQFK, GVIGD, TT, and FLKT. Glu184, His247, and His264 together coordinate Zn(2+).

The protein belongs to the sugar phosphate cyclases superfamily. Dehydroquinate synthase family. NAD(+) serves as cofactor. Co(2+) is required as a cofactor. The cofactor is Zn(2+).

It is found in the cytoplasm. The catalysed reaction is 7-phospho-2-dehydro-3-deoxy-D-arabino-heptonate = 3-dehydroquinate + phosphate. Its pathway is metabolic intermediate biosynthesis; chorismate biosynthesis; chorismate from D-erythrose 4-phosphate and phosphoenolpyruvate: step 2/7. Functionally, catalyzes the conversion of 3-deoxy-D-arabino-heptulosonate 7-phosphate (DAHP) to dehydroquinate (DHQ). The chain is 3-dehydroquinate synthase from Buchnera aphidicola subsp. Schizaphis graminum (strain Sg).